A 249-amino-acid polypeptide reads, in one-letter code: Inhibitor of growth protein 4 (249 aa).

The stretch at 25 to 118 (FQLMRDLDQR…ADLKEKQIES (94 aa)) forms a coiled coil. The segment at 115-160 (QIESSDYDSSSSKGKKKGRAQKEKKAARARSKGKNSDEEAPKTAQK) is disordered. A PHD-type zinc finger spans residues 196–245 (PTYCLCHQVSYGEMIGCDNPDCSIEWFHFACVGLTTKPRGKWFCPRCSQE). The Zn(2+) site is built by C199, C201, C212, C217, H223, C226, C239, and C242.

It belongs to the ING family. As to quaternary structure, homodimer. Component of the HBO1 complex.

The protein resides in the nucleus. In terms of biological role, component of HBO1 complexes, which specifically mediate acetylation of histone H3 at 'Lys-14' (H3K14ac), and have reduced activity toward histone H4. Through chromatin acetylation it may function in DNA replication. In Gallus gallus (Chicken), this protein is Inhibitor of growth protein 4 (ING4).